Consider the following 397-residue polypeptide: Enoyl-[acyl-carrier-protein] reductase [NADH] (397 aa).

NAD(+) is bound by residues 48–53, 74–75, 111–112, and 139–140; these read GASTGY, FE, DA, and VA. Residue Tyr225 participates in substrate binding. Tyr235 (proton donor) is an active-site residue. NAD(+)-binding positions include Lys244 and 273–275; that span reads VVT.

The protein belongs to the TER reductase family. Monomer.

The catalysed reaction is a 2,3-saturated acyl-[ACP] + NAD(+) = a (2E)-enoyl-[ACP] + NADH + H(+). It functions in the pathway lipid metabolism; fatty acid biosynthesis. In terms of biological role, involved in the final reduction of the elongation cycle of fatty acid synthesis (FAS II). Catalyzes the reduction of a carbon-carbon double bond in an enoyl moiety that is covalently linked to an acyl carrier protein (ACP). The chain is Enoyl-[acyl-carrier-protein] reductase [NADH] from Burkholderia mallei (strain SAVP1).